Consider the following 374-residue polypeptide: Flavonoid O-methyltransferase-like protein Os11g0303600 (374 aa).

The S-adenosyl-L-homocysteine site is built by D242, D262, M263, and K276. Catalysis depends on H280, which acts as the Proton acceptor.

Belongs to the class I-like SAM-binding methyltransferase superfamily. Cation-independent O-methyltransferase family. COMT subfamily.

The sequence is that of Flavonoid O-methyltransferase-like protein Os11g0303600 from Oryza sativa subsp. japonica (Rice).